Reading from the N-terminus, the 255-residue chain is Trypsin alpha-4 (255 aa).

The N-terminal stretch at 1–16 is a signal peptide; the sequence is MLKFVVLLCAISCALG. Positions 17 to 30 are cleaved as a propeptide — activation peptide; it reads AAVPEGMVPQLDGR. In terms of domain architecture, Peptidase S1 spans 31–253; that stretch reads IVGGVATTIS…LRTWVVSAAS (223 aa). A disulfide bridge connects residues cysteine 56 and cysteine 72. Residues histidine 71 and aspartate 116 each act as charge relay system in the active site. Intrachain disulfides connect cysteine 179–cysteine 196 and cysteine 205–cysteine 229. Serine 209 (charge relay system) is an active-site residue.

The protein belongs to the peptidase S1 family.

It localises to the secreted. The protein localises to the extracellular space. It carries out the reaction Preferential cleavage: Arg-|-Xaa, Lys-|-Xaa.. The polypeptide is Trypsin alpha-4 (Lucilia cuprina (Green bottle fly)).